The sequence spans 162 residues: tRNA (cytidine(34)-2'-O)-methyltransferase (162 aa).

4 residues coordinate S-adenosyl-L-methionine: Leu-83, Gly-105, Ile-127, and Ser-135.

The protein belongs to the class IV-like SAM-binding methyltransferase superfamily. RNA methyltransferase TrmH family. TrmL subfamily. Homodimer.

The protein localises to the cytoplasm. It catalyses the reaction cytidine(34) in tRNA + S-adenosyl-L-methionine = 2'-O-methylcytidine(34) in tRNA + S-adenosyl-L-homocysteine + H(+). The enzyme catalyses 5-carboxymethylaminomethyluridine(34) in tRNA(Leu) + S-adenosyl-L-methionine = 5-carboxymethylaminomethyl-2'-O-methyluridine(34) in tRNA(Leu) + S-adenosyl-L-homocysteine + H(+). Methylates the ribose at the nucleotide 34 wobble position in the two leucyl isoacceptors tRNA(Leu)(CmAA) and tRNA(Leu)(cmnm5UmAA). Catalyzes the methyl transfer from S-adenosyl-L-methionine to the 2'-OH of the wobble nucleotide. This Yersinia pestis protein is tRNA (cytidine(34)-2'-O)-methyltransferase.